We begin with the raw amino-acid sequence, 236 residues long: Pyridoxal 5'-phosphate synthase subunit PdxT (236 aa).

Residue 61 to 63 coordinates L-glutamine; that stretch reads GES. Cys-93 acts as the Nucleophile in catalysis. Residues Arg-127 and 163 to 164 each bind L-glutamine; that span reads IR. Active-site charge relay system residues include His-215 and Glu-217.

It belongs to the glutaminase PdxT/SNO family. As to quaternary structure, in the presence of PdxS, forms a dodecamer of heterodimers. Only shows activity in the heterodimer.

The catalysed reaction is aldehydo-D-ribose 5-phosphate + D-glyceraldehyde 3-phosphate + L-glutamine = pyridoxal 5'-phosphate + L-glutamate + phosphate + 3 H2O + H(+). The enzyme catalyses L-glutamine + H2O = L-glutamate + NH4(+). It participates in cofactor biosynthesis; pyridoxal 5'-phosphate biosynthesis. Its function is as follows. Catalyzes the hydrolysis of glutamine to glutamate and ammonia as part of the biosynthesis of pyridoxal 5'-phosphate. The resulting ammonia molecule is channeled to the active site of PdxS. This Arthrobacter sp. (strain FB24) protein is Pyridoxal 5'-phosphate synthase subunit PdxT.